We begin with the raw amino-acid sequence, 262 residues long: Phosphomannomutase 1 (262 aa).

Residue A2 is modified to N-acetylalanine. The active-site Nucleophile is D19. Residues D19 and D21 each contribute to the Mg(2+) site. D21 functions as the Proton donor/acceptor in the catalytic mechanism. Residues R28, R132, R143, R150, M186, S188, and D190 each coordinate alpha-D-mannose 1-phosphate. 4 residues coordinate Mg(2+): N218, Y230, D232, and T235. S242 carries the post-translational modification Phosphoserine.

This sequence belongs to the eukaryotic PMM family. Homodimer. Mg(2+) serves as cofactor. Present in brain, where it is restricted to neuronal cell bodies. Present at lower levels in pancreas, liver, lung, gonads, uterus, adrenal glands and pituitary (at protein level). Undetectable in intestine.

It is found in the cytoplasm. It catalyses the reaction alpha-D-mannose 1-phosphate = D-mannose 6-phosphate. It participates in nucleotide-sugar biosynthesis; GDP-alpha-D-mannose biosynthesis; alpha-D-mannose 1-phosphate from D-fructose 6-phosphate: step 2/2. With respect to regulation, IMP, a metabolite whose concentration is elevated in anoxia, inhibits phosphomannomutase and phosphoglucomutase activities and strongly enhances glucose-1,6-bisphosphatase activity. Functionally, involved in the synthesis of the GDP-mannose and dolichol-phosphate-mannose required for a number of critical mannosyl transfer reactions. In addition, may be responsible for the degradation of glucose-1,6-bisphosphate in ischemic brain. This Mus musculus (Mouse) protein is Phosphomannomutase 1 (Pmm1).